The sequence spans 2365 residues: Voltage-dependent T-type calcium channel subunit alpha-1H (2365 aa).

A disordered region spans residues 1–63; that stretch reads MTEGTLAADE…PGTECGADLG (63 aa). At 1 to 100 the chain is on the cytoplasmic side; the sequence is MTEGTLAADE…SWCLRLVSRR (100 aa). Residues 16-36 are compositionally biased toward low complexity; sequence GASPSAPAAPVRASPASPGVP. An I repeat occupies 87 to 422; sequence TRPRSWCLRL…LCLVVIATQF (336 aa). Residues 101 to 119 traverse the membrane as a helical segment; sequence WFEHISMLVIMLNCVTLGM. The Extracellular portion of the chain corresponds to 120–141; sequence FRPCEDVECRSERCSILEAFDD. D140 is a Zn(2+) binding site. The chain crosses the membrane as a helical span at residues 142 to 160; sequence FIFAFFAVEMVIKMVALGL. Residues 161-169 are Cytoplasmic-facing; it reads FGQKCYLGD. Residues 170–184 form a helical membrane-spanning segment; the sequence is TWNRLDFFIVMAGMM. At 185 to 193 the chain is on the extracellular side; sequence EYSLDGHNV. Residues D189 and H191 each contribute to the Zn(2+) site. Residue N192 is glycosylated (N-linked (GlcNAc...) asparagine). The chain crosses the membrane as a helical span at residues 194-212; sequence SLSAIRTVRVLRPLRAINR. Topologically, residues 213-232 are cytoplasmic; sequence VPSMRILVTLLLDTLPMLGN. The helical transmembrane segment at 233–253 threads the bilayer; it reads VLLLCFFVFFIFGIVGVQLWA. The Extracellular segment spans residues 254–394; it reads GLLRNRCFLD…YYVMDAHSFY (141 aa). N271 carries N-linked (GlcNAc...) asparagine glycosylation. Residues 395 to 419 traverse the membrane as a helical segment; sequence NFIYFILLIIVGSFFMINLCLVVIA. The Cytoplasmic portion of the chain corresponds to 420–790; sequence TQFSETKQRE…SKLRRIVDSK (371 aa). Disordered regions lie at residues 490–573, 618–656, and 737–761; these read VDPS…SESV, PSGA…SPSP, and GDCR…RWRP. The span at 500–532 shows a compositional bias: basic residues; that stretch reads GPRRRPRRAGRRTASVHHLVYHHHHHHHHHYHF. Positions 557-566 are enriched in pro residues; it reads PPSPPSPGHG. A compositionally biased stretch (polar residues) spans 621 to 631; that stretch reads AVNSKGSTSSR. One copy of the II repeat lies at 776 to 1015; that stretch reads WASFSSKLRR…LLVAILVEGF (240 aa). The chain crosses the membrane as a helical span at residues 791 to 811; the sequence is YFNRGIMAAILVNTLSMGVEY. Over 812–824 the chain is Extracellular; sequence HEQPDELTNALEI. The chain crosses the membrane as a helical span at residues 825-846; sequence SNIVFTSMFALEMLLKLLACGP. The Cytoplasmic portion of the chain corresponds to 847-852; sequence LGYIRN. A helical membrane pass occupies residues 853 to 871; the sequence is PYNIFDGIVVIISVWEIVG. Over 872-879 the chain is Extracellular; the sequence is QADGGLSV. Residues 880–903 form a helical membrane-spanning segment; that stretch reads LRTFRLLRVLKLVRFLPALRRQLV. The Cytoplasmic portion of the chain corresponds to 904–914; that stretch reads VLMRTMDNVAT. A helical membrane pass occupies residues 915–935; that stretch reads FCMLLMLFIFIFSILGMHLFG. At 936–987 the chain is on the extracellular side; it reads CKFSLKTDSGDTVPDRKNFDSLLWAIVTVFQILTQEDWNVVLYNGMASTSSW. A helical membrane pass occupies residues 988–1012; that stretch reads AALYFVALMTFGNYVLFNLLVAILV. The Cytoplasmic segment spans residues 1013-1301; it reads EGFQAEGDAT…NRLRVSCQKV (289 aa). The segment at 1059 to 1215 is disordered; the sequence is PNGHLEGRGS…HRSTMDLCPP (157 aa). Residues 1130–1147 show a composition bias toward low complexity; sequence GPNSAGSSRRSSWNSLGR. A compositionally biased stretch (basic and acidic residues) spans 1199-1209; the sequence is RRAESLGHRST. Residues 1292–1569 form an III repeat; sequence NRLRVSCQKV…MFVGVVVENF (278 aa). A helical membrane pass occupies residues 1302 to 1324; the sequence is IAHKMFDHVVLVFIFLNCITIAL. Topologically, residues 1325–1342 are extracellular; that stretch reads ERPDIDPGSTERAFLSVS. The chain crosses the membrane as a helical span at residues 1343-1363; sequence NYIFTAIFVVEMMVKVVALGL. Residues 1364–1373 are Cytoplasmic-facing; sequence LWGEHAYLQS. The helical transmembrane segment at 1374–1393 threads the bilayer; the sequence is SWNVLDGLLVLVSLVDIIVA. The Extracellular portion of the chain corresponds to 1394-1407; the sequence is VASAGGAKILGVLR. The helical transmembrane segment at 1408-1429 threads the bilayer; it reads VLRLLRTLRPLRVISRAPGLKL. The Cytoplasmic portion of the chain corresponds to 1430-1439; sequence VVETLISSLR. The chain crosses the membrane as a helical span at residues 1440 to 1463; the sequence is PIGNIVLICCAFFIIFGILGVQLF. The Extracellular portion of the chain corresponds to 1464-1540; sequence KGKFYYCEGT…DQQPVQNHNP (77 aa). A glycan (N-linked (GlcNAc...) asparagine) is linked at N1477. Residues 1541–1566 form a helical membrane-spanning segment; the sequence is WMLLYFISFLLIVSFFVLNMFVGVVV. Residues 1567-1627 lie on the Cytoplasmic side of the membrane; it reads ENFHKCRQHQ…RRSIHSLCTS (61 aa). The stretch at 1613-1874 is one IV repeat; sequence DYSHTRRSIH…VVVAVLMKHL (262 aa). The chain crosses the membrane as a helical span at residues 1628–1648; sequence HYLDLFITFIICLNVITMSME. Residues 1649–1662 lie on the Extracellular side of the membrane; the sequence is HYNQPKSLDEALKY. The helical transmembrane segment at 1663-1684 threads the bilayer; the sequence is CNYVFTIVFVFEAALKLVAFGF. The Cytoplasmic segment spans residues 1685–1691; sequence RRFFKDR. The helical transmembrane segment at 1692–1710 threads the bilayer; sequence WNQLDLAIVLLSIMGIALE. Over 1711–1724 the chain is Extracellular; the sequence is EIEMNAALPINPTI. Residues 1725–1748 form a helical membrane-spanning segment; that stretch reads IRIMRVLRIARVLKLLKMATGMRA. The Cytoplasmic portion of the chain corresponds to 1749 to 1762; that stretch reads LLDTVVQALPQVGN. A helical transmembrane segment spans residues 1763 to 1783; the sequence is LGLLFMLLFFIYAALGVELFG. Topologically, residues 1784–1846 are extracellular; that stretch reads RLECSEDNPC…KHCLSYLPAL (63 aa). The helical transmembrane segment at 1847–1874 threads the bilayer; the sequence is SPVYFVTFVLVAQFVLVNVVVAVLMKHL. Residues 1875–2365 are Cytoplasmic-facing; that stretch reads EESNKEARED…APDDSGDEPV (491 aa). Composition is skewed to polar residues over residues 1897–1916 and 1967–1983; these read QGST…TEPD and VTSA…SFQV. Disordered stretches follow at residues 1897 to 1920, 1967 to 1999, 2053 to 2264, and 2321 to 2365; these read QGST…TPNL, VTSA…PLCA, APLG…GERW, and ELSM…DEPV. The segment covering 2092–2102 has biased composition (acidic residues); it reads DDAEAADPADE. The span at 2172 to 2187 shows a compositional bias: basic and acidic residues; that stretch reads GDGHLESGEVRARASE.

It belongs to the calcium channel alpha-1 subunit (TC 1.A.1.11) family. CACNA1H subfamily. As to quaternary structure, interacts (via N-terminal cytoplasmic domain) with STAC. In terms of processing, in response to raising of intracellular calcium, the T-type channels are activated by CaM-kinase II. In terms of tissue distribution, is highly expressed in lumbosacral and thoracolumbar dorsal root ganglion neurons.

It is found in the cell membrane. It carries out the reaction Ca(2+)(in) = Ca(2+)(out). In terms of biological role, voltage-sensitive calcium channel that gives rise to T-type calcium currents. T-type calcium channels belong to the 'low-voltage activated (LVA)' group. A particularity of this type of channel is an opening at quite negative potentials, and a voltage-dependent inactivation. T-type channels serve pacemaking functions in both central neurons and cardiac nodal cells and support calcium signaling in secretory cells and vascular smooth muscle. They may also be involved in the modulation of firing patterns of neurons. In the adrenal zona glomerulosa, participates in the signaling pathway leading to aldosterone production in response to either AGT/angiotensin II, or hyperkalemia. This Mus musculus (Mouse) protein is Voltage-dependent T-type calcium channel subunit alpha-1H (Cacna1h).